Here is a 116-residue protein sequence, read N- to C-terminus: NADH-ubiquinone oxidoreductase chain 3 (116 aa).

A run of 3 helical transmembrane segments spans residues 3–23 (LITT…TISF), 56–76 (FFLI…LLPL), and 85–105 (PALT…GLIY).

This sequence belongs to the complex I subunit 3 family.

The protein localises to the mitochondrion membrane. It carries out the reaction a ubiquinone + NADH + 5 H(+)(in) = a ubiquinol + NAD(+) + 4 H(+)(out). Its function is as follows. Core subunit of the mitochondrial membrane respiratory chain NADH dehydrogenase (Complex I) that is believed to belong to the minimal assembly required for catalysis. Complex I functions in the transfer of electrons from NADH to the respiratory chain. The immediate electron acceptor for the enzyme is believed to be ubiquinone. This Salmo salar (Atlantic salmon) protein is NADH-ubiquinone oxidoreductase chain 3 (MT-ND3).